Consider the following 89-residue polypeptide: Translation initiation factor IF-1 1 (89 aa).

Residues 1–73 (MSNKEQLIEM…TKGRITFRHL (73 aa)) form the S1-like domain.

It belongs to the IF-1 family. Component of the 30S ribosomal translation pre-initiation complex which assembles on the 30S ribosome in the order IF-2 and IF-3, IF-1 and N-formylmethionyl-tRNA(fMet); mRNA recruitment can occur at any time during PIC assembly.

It localises to the cytoplasm. Its function is as follows. One of the essential components for the initiation of protein synthesis. Stabilizes the binding of IF-2 and IF-3 on the 30S subunit to which N-formylmethionyl-tRNA(fMet) subsequently binds. Helps modulate mRNA selection, yielding the 30S pre-initiation complex (PIC). Upon addition of the 50S ribosomal subunit IF-1, IF-2 and IF-3 are released leaving the mature 70S translation initiation complex. The protein is Translation initiation factor IF-1 1 of Acidovorax sp. (strain JS42).